We begin with the raw amino-acid sequence, 368 residues long: Putative potassium channel KAT5 (368 aa).

3 helical membrane-spanning segments follow: residues 33–53 (WWHMFLIMLVLYSAWASPFEL), 97–117 (LLNLLRLWRLRCASKLFARVE), and 132–152 (LLCVTLFALHFAACIYLWMVF). The segment at residues 180–199 (CAVYWSITTLATVGYGDLHA) is an intramembrane region (pore-forming). Residues 206-226 (LFSIAFMLFNMGLTSYIIGNI) form a helical membrane-spanning segment. Residue 225 to 344 (NITNLVVRET…CIVFSNFILV (120 aa)) coordinates a nucleoside 3',5'-cyclic phosphate.

The protein belongs to the potassium channel family. Plant (TC 1.A.1.4) subfamily.

The protein localises to the membrane. Functionally, putative inward-rectifying potassium channel. The chain is Putative potassium channel KAT5 from Oryza sativa subsp. japonica (Rice).